The chain runs to 449 residues: Cytochrome P450 2E1 (449 aa).

254–259 is a binding site for substrate; it reads FAGTET. Cys393 is a heme binding site.

The protein belongs to the cytochrome P450 family. In terms of assembly, interacts with chaperones HSP70 and HSP90; this interaction is required for initial targeting to mitochondria. Heme serves as cofactor.

It localises to the endoplasmic reticulum membrane. Its subcellular location is the microsome membrane. The protein localises to the mitochondrion inner membrane. It catalyses the reaction an organic molecule + reduced [NADPH--hemoprotein reductase] + O2 = an alcohol + oxidized [NADPH--hemoprotein reductase] + H2O + H(+). The catalysed reaction is (5Z,8Z,11Z)-eicosatrienoate + reduced [NADPH--hemoprotein reductase] + O2 = 19-hydroxy-(5Z,8Z,11Z)-eicosatrienoate + oxidized [NADPH--hemoprotein reductase] + H2O + H(+). The enzyme catalyses (5Z,8Z,11Z,14Z,17Z)-eicosapentaenoate + reduced [NADPH--hemoprotein reductase] + O2 = 19-hydroxy-(5Z,8Z,11Z,14Z,17Z)-eicosapentaenoate + oxidized [NADPH--hemoprotein reductase] + H2O + H(+). It carries out the reaction (4Z,7Z,10Z,13Z,16Z,19Z)-docosahexaenoate + reduced [NADPH--hemoprotein reductase] + O2 = 21-hydroxy-(4Z,7Z,10Z,13Z,16Z,19Z)-docosahexaenoate + oxidized [NADPH--hemoprotein reductase] + H2O + H(+). It catalyses the reaction dodecanoate + reduced [NADPH--hemoprotein reductase] + O2 = 11-hydroxydodecanoate + oxidized [NADPH--hemoprotein reductase] + H2O + H(+). The catalysed reaction is tetradecanoate + reduced [NADPH--hemoprotein reductase] + O2 = 13-hydroxytetradecanoate + oxidized [NADPH--hemoprotein reductase] + H2O + H(+). The enzyme catalyses 4-nitrophenol + NADPH + O2 + H(+) = 4-nitrocatechol + NADP(+) + H2O. It functions in the pathway lipid metabolism; fatty acid metabolism. Its activity is regulated as follows. The omega-1 hydroxylase activity is stimulated by cytochrome b5. A cytochrome P450 monooxygenase involved in the metabolism of fatty acids. Mechanistically, uses molecular oxygen inserting one oxygen atom into a substrate, and reducing the second into a water molecule, with two electrons provided by NADPH via cytochrome P450 reductase (NADPH--hemoprotein reductase). Catalyzes the hydroxylation of carbon-hydrogen bonds. Hydroxylates fatty acids specifically at the omega-1 position displaying the highest catalytic activity for saturated fatty acids. May be involved in the oxidative metabolism of xenobiotics. This Macaca fascicularis (Crab-eating macaque) protein is Cytochrome P450 2E1 (CYP2E1).